A 245-amino-acid polypeptide reads, in one-letter code: Protein crossbronx (245 aa).

The UBC core domain maps to 20–177 (QQEYKILAEY…VQESIVESKS (158 aa)).

The protein belongs to the ubiquitin-conjugating enzyme family. FTS subfamily.

This is Protein crossbronx (cbx) from Drosophila virilis (Fruit fly).